The chain runs to 497 residues: Serine/threonine-protein kinase cst-1 (497 aa).

The interval 1–27 (MPPSTDSSRRNSEEGSSDGFKLDSSAL) is disordered. Positions 35–286 (FDIVGKLGEG…ALRLCEHTFI (252 aa)) constitute a Protein kinase domain. ATP is bound by residues 41-49 (LGEGSYGSV) and Lys64. The active-site Proton acceptor is the Asp154. A disordered region spans residues 367 to 416 (KSAYIPGSSKNGNSPRVQPPGHTASASDPSKNQPFAQDGTGPNFQLGTSE). A compositionally biased stretch (polar residues) spans 390-416 (ASASDPSKNQPFAQDGTGPNFQLGTSE). An SARAH domain is found at 446-493 (FEFLRNITLDELIRRKESLDSEMEEEIRELQRRYKTKRQPILDVIEIK). A coiled-coil region spans residues 450 to 486 (RNITLDELIRRKESLDSEMEEEIRELQRRYKTKRQPI).

This sequence belongs to the protein kinase superfamily. STE Ser/Thr protein kinase family. STE20 subfamily. Interacts with rsf-1 (via SARAH domain); the interaction is required for the phosphorylation of cst-1. It depends on Mg(2+) as a cofactor. Post-translationally, proteolytically cleaved by caspase-3 during apoptosis which results in kinase activation. Phosphorylated. Widely expressed in epidermal cells.

It carries out the reaction L-seryl-[protein] + ATP = O-phospho-L-seryl-[protein] + ADP + H(+). The enzyme catalyses L-threonyl-[protein] + ATP = O-phospho-L-threonyl-[protein] + ADP + H(+). Functionally, serine/threonine-protein kinase which extends lifespan and delays tissue aging, probably by activating daf-16. The polypeptide is Serine/threonine-protein kinase cst-1 (Caenorhabditis elegans).